Consider the following 302-residue polypeptide: Sulfate adenylyltransferase subunit 2 (302 aa).

This sequence belongs to the PAPS reductase family. CysD subfamily. As to quaternary structure, heterodimer composed of CysD, the smaller subunit, and CysN.

It catalyses the reaction sulfate + ATP + H(+) = adenosine 5'-phosphosulfate + diphosphate. It functions in the pathway sulfur metabolism; hydrogen sulfide biosynthesis; sulfite from sulfate: step 1/3. In terms of biological role, with CysN forms the ATP sulfurylase (ATPS) that catalyzes the adenylation of sulfate producing adenosine 5'-phosphosulfate (APS) and diphosphate, the first enzymatic step in sulfur assimilation pathway. APS synthesis involves the formation of a high-energy phosphoric-sulfuric acid anhydride bond driven by GTP hydrolysis by CysN coupled to ATP hydrolysis by CysD. In Escherichia coli O7:K1 (strain IAI39 / ExPEC), this protein is Sulfate adenylyltransferase subunit 2.